A 431-amino-acid polypeptide reads, in one-letter code: MLALLAASVALAVAAGAQDSPAPGSRFVCTALPPEAVHAGCPLPAMPMQGGAQSPEEELRAAVLQLRETVVQQKETLGAQREAIRELTGKLARCEGLAGGKARGAGATGKDTMGDLPRDPGHVVEQLSRSLQTLKDRLESLEHQLRANVSNAGLPGDFREVLQQRLGELERQLLRKVAELEDEKSLLHNETSAHRQKTESTLNALLQRVTELERGNSAFKSPDAFKVSLPLRTNYLYGKIKKTLPELYAFTICLWLRSSASPGIGTPFSYAVPGQANEIVLIEWGNNPIELLINDKVAQLPLFVSDGKWHHICVTWTTRDGMWEAFQDGEKLGTGENLAPWHPIKPGGVLILGQEQDTVGGRFDATQAFVGELSQFNIWDRVLRAQEIVNIANCSTNMPGNIIPWVDNNVDVFGGASKWPVETCEERLLDL.

The signal sequence occupies residues 1–15 (MLALLAASVALAVAA). Residues asparagine 148 and asparagine 189 are each glycosylated (N-linked (GlcNAc...) asparagine). One can recognise a Pentraxin (PTX) domain in the interval 223 to 424 (DAFKVSLPLR…GASKWPVETC (202 aa)). A disulfide bridge links cysteine 253 with cysteine 313. Residues asparagine 277, glutamate 355, glutamine 356, aspartate 357, and glutamine 367 each contribute to the Ca(2+) site. Asparagine 393 carries N-linked (GlcNAc...) asparagine glycosylation.

Homooligomer or heterooligomer (probably pentamer) with neuronal pentraxin receptor (NPTXR). Requires Ca(2+) as cofactor. In terms of tissue distribution, brain, pancreas, liver, heart and skeletal muscle. Highest levels are seen in the testis.

It localises to the secreted. Likely to play role in the modification of cellular properties that underlie long-term plasticity. Binds to agar matrix in a calcium-dependent manner. The polypeptide is Neuronal pentraxin-2 (NPTX2) (Homo sapiens (Human)).